Here is a 229-residue protein sequence, read N- to C-terminus: UPF0173 metal-dependent hydrolase SAB1566c (229 aa).

It belongs to the UPF0173 family.

The sequence is that of UPF0173 metal-dependent hydrolase SAB1566c from Staphylococcus aureus (strain bovine RF122 / ET3-1).